Reading from the N-terminus, the 64-residue chain is Bubble protein (64 aa).

Cystine bridges form between Cys3/Cys30, Cys18/Cys38, Cys28/Cys54, and Cys49/Cys64.

It localises to the secreted. May act as a toxin. May recognize a molecule or part of a molecule with a negatively charged surface potential. This is Bubble protein from Penicillium brevicompactum.